A 332-amino-acid chain; its full sequence is 2,3-diketo-L-gulonate reductase (332 aa).

H44 serves as the catalytic Proton donor. NAD(+) contacts are provided by residues 168–174, 224–225, and 304–306; these read ITMVDMS, WK, and GHE.

The protein belongs to the LDH2/MDH2 oxidoreductase family. DlgD subfamily. As to quaternary structure, homodimer.

The protein resides in the cytoplasm. It carries out the reaction 3-dehydro-L-gulonate + NAD(+) = 2,3-dioxo-L-gulonate + NADH + H(+). It catalyses the reaction 3-dehydro-L-gulonate + NADP(+) = 2,3-dioxo-L-gulonate + NADPH + H(+). In terms of biological role, catalyzes the reduction of 2,3-diketo-L-gulonate in the presence of NADH, to form 3-keto-L-gulonate. This chain is 2,3-diketo-L-gulonate reductase, found in Escherichia coli O81 (strain ED1a).